The following is a 230-amino-acid chain: MKDLPIIALDFESKEKVNRFLDLFDESLFVKVGMELFYQEGPQLINEIKERGHDVFLDLKLHDIPNTVGKAMEGLAKLNVDLVNVHAAGGVKMMSEAIKGLRKHNEHTKIIAVTQLTSTTEDMLRHEQNIQTSIEEAVLNYAKLANATGLDGVVCSPLESRMLTEKLGASFLKVTPGIRPKGASQDDQHRITTPEEARQLGSTHIVVGRPITQSDNPVESYHKIKESWLV.

Substrate is bound by residues D10, K31, D58–T67, T117, R179, Q188, G208, and R209. The active-site Proton donor is K60.

The protein belongs to the OMP decarboxylase family. Type 1 subfamily. Homodimer.

The catalysed reaction is orotidine 5'-phosphate + H(+) = UMP + CO2. The protein operates within pyrimidine metabolism; UMP biosynthesis via de novo pathway; UMP from orotate: step 2/2. Functionally, catalyzes the decarboxylation of orotidine 5'-monophosphate (OMP) to uridine 5'-monophosphate (UMP). The polypeptide is Orotidine 5'-phosphate decarboxylase (Staphylococcus aureus (strain bovine RF122 / ET3-1)).